The following is a 339-amino-acid chain: BTB/POZ domain-containing protein KCTD9 (339 aa).

Residues 3–82 form the KHA domain; sequence RVTLFLNGSP…PQTDARPPGG (80 aa). Ser11 carries the post-translational modification Phosphoserine. The region spanning 89–161 is the BTB domain; that stretch reads DWLTLNVGGR…LRHGQLIVND (73 aa). 3 Pentapeptide repeat domains span residues 223–247, 253–292, and 293–327; these read ANLQ…NFED, ANLE…NLRG, and ATLA…IFEE.

As to quaternary structure, forms pentamers. Component of a complex mades of five KCTD9 and five CUL3 subunits.

Its pathway is protein modification; protein ubiquitination. Functionally, substrate-specific adapter of a BCR (BTB-CUL3-RBX1) E3 ubiquitin-protein ligase complex, which mediates the ubiquitination of target proteins, leading to their degradation by the proteasome. This Mus musculus (Mouse) protein is BTB/POZ domain-containing protein KCTD9 (Kctd9).